Reading from the N-terminus, the 335-residue chain is DNA-directed RNA polymerase subunit alpha (335 aa).

Residues Met-1–Glu-233 form an alpha N-terminal domain (alpha-NTD) region. Residues Lys-264–Asn-335 form an alpha C-terminal domain (alpha-CTD) region.

It belongs to the RNA polymerase alpha chain family. As to quaternary structure, in plastids the minimal PEP RNA polymerase catalytic core is composed of four subunits: alpha, beta, beta', and beta''. When a (nuclear-encoded) sigma factor is associated with the core the holoenzyme is formed, which can initiate transcription.

The protein resides in the plastid. Its subcellular location is the chloroplast. The enzyme catalyses RNA(n) + a ribonucleoside 5'-triphosphate = RNA(n+1) + diphosphate. Functionally, DNA-dependent RNA polymerase catalyzes the transcription of DNA into RNA using the four ribonucleoside triphosphates as substrates. The chain is DNA-directed RNA polymerase subunit alpha from Pinus koraiensis (Korean pine).